Reading from the N-terminus, the 523-residue chain is F-box only protein 31-B (523 aa).

Positions 59–105 (PRSLLQLPPEILVEIFSSLPGTELPSLAQVCRKFRQILTTDTIWKRR) constitute an F-box domain. Zn(2+)-binding residues include Cys201, His209, Cys225, and His231. Positions 372–427 (IQREQRQTGNEEDDGKGAGPDRAEHSQQPAPVHRPAKEDVNGVDNADDREQKPPNV) are disordered. Composition is skewed to basic and acidic residues over residues 386-396 (GKGAGPDRAEH) and 406-423 (PAKE…REQK).

This sequence belongs to the FBXO31 family. Part of a SCF (SKP1-cullin-F-box) protein ligase complex SCF(FBXO31).

The protein localises to the cytoplasm. It functions in the pathway protein modification; protein ubiquitination. Substrate-recognition component of the SCF(FBXO31) protein ligase complex, which specifically mediates the ubiquitination of proteins amidated at their C-terminus in response to oxidative stress, leading to their degradation by the proteasome. Fbxo31 specifically recognizes and binds C-terminal peptides bearing an amide: C-terminal amidation in response to oxidative stress takes place following protein fragmentation. The SCF(FBXO31) also plays a role in G1 arrest following DNA damage by mediating ubiquitination of phosphorylated cyclin-D1 (ccnd1), promoting its degradation by the proteasome, resulting in G1 arrest. The SCF(FBXO31) complex is however not a major regulator of ccnd1 stability during the G1/S transition. This is F-box only protein 31-B (fbxo31-b) from Xenopus laevis (African clawed frog).